A 153-amino-acid chain; its full sequence is Xanthine-guanine phosphoribosyltransferase (153 aa).

Residues 37–38 (RG), Arg69, and 88–96 (DDLVDTGGT) each bind 5-phospho-alpha-D-ribose 1-diphosphate. Residue Arg69 participates in GMP binding. Asp89 contributes to the Mg(2+) binding site. Guanine contacts are provided by Asp92 and Ile135. Xanthine contacts are provided by Asp92 and Ile135. GMP is bound by residues 92-96 (DTGGT) and 134-135 (WI).

Belongs to the purine/pyrimidine phosphoribosyltransferase family. XGPT subfamily. Homotetramer. Mg(2+) serves as cofactor.

Its subcellular location is the cell membrane. It carries out the reaction GMP + diphosphate = guanine + 5-phospho-alpha-D-ribose 1-diphosphate. The enzyme catalyses XMP + diphosphate = xanthine + 5-phospho-alpha-D-ribose 1-diphosphate. It catalyses the reaction IMP + diphosphate = hypoxanthine + 5-phospho-alpha-D-ribose 1-diphosphate. It functions in the pathway purine metabolism; GMP biosynthesis via salvage pathway; GMP from guanine: step 1/1. It participates in purine metabolism; XMP biosynthesis via salvage pathway; XMP from xanthine: step 1/1. In terms of biological role, purine salvage pathway enzyme that catalyzes the transfer of the ribosyl-5-phosphate group from 5-phospho-alpha-D-ribose 1-diphosphate (PRPP) to the N9 position of the 6-oxopurines guanine and xanthine to form the corresponding ribonucleotides GMP (guanosine 5'-monophosphate) and XMP (xanthosine 5'-monophosphate), with the release of PPi. To a lesser extent, also acts on hypoxanthine. The polypeptide is Xanthine-guanine phosphoribosyltransferase (Buchnera aphidicola subsp. Baizongia pistaciae (strain Bp)).